The sequence spans 289 residues: MSEYTTREVGALNTLDYQVYVEKNGTPISSWHDIPLYANAEKTILNMVVEIPRWTQAKLEITKEATLNPIKQDTKKGKLRFVRNCFPHHGYIWNYGAFPQTYEDPNVVHPETKAKGDSDPLDVCEIGEARGYTGQVKQVKVLGVMALLDEGETDWKVIVIDVNDPLAPKLNDIEDVERHMPGLIRATNEWFRIYKIPDGKPENSFAFSGECKNRKYAEEVVRECNEAWERLITGKTDAKSDFSLVNVSVTGSVANDPSVSSTIPPAQELAPAPVDPSVHKWFYISGSPL.

Residue R80 coordinates diphosphate. Mg(2+) is bound by residues D117, D122, and D154.

The protein belongs to the PPase family. In terms of assembly, homodimer. The cofactor is Mg(2+).

The protein resides in the cytoplasm. The enzyme catalyses diphosphate + H2O = 2 phosphate + H(+). The polypeptide is Inorganic pyrophosphatase (ppa1) (Schizosaccharomyces pombe (strain 972 / ATCC 24843) (Fission yeast)).